Here is a 235-residue protein sequence, read N- to C-terminus: Regulator of G-protein signaling 18 (235 aa).

Phosphoserine is present on Ser49. An RGS domain is found at 86–202 (SFDKLLSHRD…LKSETYLHLI (117 aa)). 2 positions are modified to phosphoserine: Ser216 and Ser218.

In terms of tissue distribution, expressed in bone marrow, spleen, fetal liver and lung. At very low levels expressed in heart.

Its subcellular location is the cytoplasm. Its function is as follows. Inhibits signal transduction by increasing the GTPase activity of G protein alpha subunits thereby driving them into their inactive GDP-bound form. Binds to G(i) alpha-1, G(i) alpha-2, G(i) alpha-3 and G(q) alpha. In Mus musculus (Mouse), this protein is Regulator of G-protein signaling 18 (Rgs18).